We begin with the raw amino-acid sequence, 493 residues long: Cysteine sulfinic acid decarboxylase (493 aa).

At Lys305 the chain carries N6-(pyridoxal phosphate)lysine.

The protein belongs to the group II decarboxylase family. Homodimer. It depends on pyridoxal 5'-phosphate as a cofactor. In terms of tissue distribution, expressed in brain, liver and kidney.

The catalysed reaction is L-aspartate + H(+) = beta-alanine + CO2. The enzyme catalyses 3-sulfino-L-alanine + H(+) = hypotaurine + CO2. It catalyses the reaction L-cysteate + H(+) = taurine + CO2. The protein operates within organosulfur biosynthesis; taurine biosynthesis; hypotaurine from L-cysteine: step 2/2. Catalyzes the decarboxylation of L-aspartate, 3-sulfino-L-alanine (cysteine sulfinic acid), and L-cysteate to beta-alanine, hypotaurine and taurine, respectively. The preferred substrate is 3-sulfino-L-alanine. Does not exhibit any decarboxylation activity toward glutamate. The polypeptide is Cysteine sulfinic acid decarboxylase (Csad) (Rattus norvegicus (Rat)).